The sequence spans 517 residues: Apolipoprotein N-acyltransferase (517 aa).

Helical transmembrane passes span 5-25 (SFFSLGRLLLAVPAGAIATLT), 26-46 (FAPYNYWLLAPVSIALLLWLL), 55-75 (GLIGFLWGLGLFGTGISWVHV), 90-110 (FLMSSLISYLALYPAAFGALF), 128-148 (VIWLLLDWVRGWALTGFPWLW), 162-182 (APILGVEGITLALVLISGALV), and 193-213 (LMVPVLIMALTWAANTVSWVV). Positions 225–471 (IQGNVPQELK…TAVLRATITP (247 aa)) constitute a CN hydrolase domain. The active-site Proton acceptor is the E264. Residue K330 is part of the active site. The active-site Nucleophile is the C382.

The protein belongs to the CN hydrolase family. Apolipoprotein N-acyltransferase subfamily.

Its subcellular location is the cell inner membrane. The enzyme catalyses N-terminal S-1,2-diacyl-sn-glyceryl-L-cysteinyl-[lipoprotein] + a glycerophospholipid = N-acyl-S-1,2-diacyl-sn-glyceryl-L-cysteinyl-[lipoprotein] + a 2-acyl-sn-glycero-3-phospholipid + H(+). The protein operates within protein modification; lipoprotein biosynthesis (N-acyl transfer). Its function is as follows. Catalyzes the phospholipid dependent N-acylation of the N-terminal cysteine of apolipoprotein, the last step in lipoprotein maturation. This is Apolipoprotein N-acyltransferase from Photobacterium profundum (strain SS9).